A 153-amino-acid polypeptide reads, in one-letter code: Hydrogenase expression/formation protein HoxT (153 aa).

Belongs to the HupJ family.

The chain is Hydrogenase expression/formation protein HoxT (hoxT) from Azotobacter vinelandii.